Reading from the N-terminus, the 574-residue chain is Ankyrin repeat protein B18 (574 aa).

6 ANK repeats span residues 56–87 (TGYT…DVTI), 135–164 (IKSR…DPNF), 167–213 (DGYT…NLNA), 217–249 (CGNT…NFEI), 253–285 (HGLT…NVGE), and 327–356 (EGKT…DINA). Positions 541 to 574 (KCLLTLLPSEIIYEILYMLTIYDLYNISYPPTKV) constitute an F-box domain.

In Variola virus (isolate Human/India/Ind3/1967) (VARV), this protein is Ankyrin repeat protein B18.